Here is a 142-residue protein sequence, read N- to C-terminus: Cystatin-8 (142 aa).

A signal peptide spans 1–19 (MAKPLWLSLILFIIPVALA). A glycan (N-linked (GlcNAc...) asparagine) is linked at N39. The Secondary area of contact motif lies at 77–81 (QITDR). 2 disulfides stabilise this stretch: C95-C105 and C119-C139. An N-linked (GlcNAc...) asparagine glycan is attached at N100.

The protein belongs to the cystatin family. In terms of tissue distribution, proximal caput region of the epididymis. Lower expression in the testis. Within the testis it is localized to the elongating spermatids, whereas within the epididymis it is exclusively synthesized by the proximal caput epithelium.

It localises to the secreted. Its function is as follows. Performs a specialized role during sperm development and maturation. This is Cystatin-8 (Cst8) from Mus musculus (Mouse).